The following is a 612-amino-acid chain: Dihydroxy-acid dehydratase (612 aa).

D81 provides a ligand contact to Mg(2+). C122 lines the [2Fe-2S] cluster pocket. Residues D123 and K124 each contribute to the Mg(2+) site. K124 is subject to N6-carboxylysine. Residue C193 participates in [2Fe-2S] cluster binding. Mg(2+) is bound at residue E489. S515 (proton acceptor) is an active-site residue.

Belongs to the IlvD/Edd family. In terms of assembly, homodimer. The cofactor is [2Fe-2S] cluster. Mg(2+) is required as a cofactor.

The enzyme catalyses (2R)-2,3-dihydroxy-3-methylbutanoate = 3-methyl-2-oxobutanoate + H2O. The catalysed reaction is (2R,3R)-2,3-dihydroxy-3-methylpentanoate = (S)-3-methyl-2-oxopentanoate + H2O. It participates in amino-acid biosynthesis; L-isoleucine biosynthesis; L-isoleucine from 2-oxobutanoate: step 3/4. The protein operates within amino-acid biosynthesis; L-valine biosynthesis; L-valine from pyruvate: step 3/4. In terms of biological role, functions in the biosynthesis of branched-chain amino acids. Catalyzes the dehydration of (2R,3R)-2,3-dihydroxy-3-methylpentanoate (2,3-dihydroxy-3-methylvalerate) into 2-oxo-3-methylpentanoate (2-oxo-3-methylvalerate) and of (2R)-2,3-dihydroxy-3-methylbutanoate (2,3-dihydroxyisovalerate) into 2-oxo-3-methylbutanoate (2-oxoisovalerate), the penultimate precursor to L-isoleucine and L-valine, respectively. This Xanthomonas axonopodis pv. citri (strain 306) protein is Dihydroxy-acid dehydratase.